The following is a 449-amino-acid chain: Phosphoglucosamine mutase (449 aa).

S100 serves as the catalytic Phosphoserine intermediate. Positions 100, 241, 243, and 245 each coordinate Mg(2+). Position 100 is a phosphoserine (S100).

It belongs to the phosphohexose mutase family. It depends on Mg(2+) as a cofactor. Post-translationally, activated by phosphorylation.

The catalysed reaction is alpha-D-glucosamine 1-phosphate = D-glucosamine 6-phosphate. Catalyzes the conversion of glucosamine-6-phosphate to glucosamine-1-phosphate. The protein is Phosphoglucosamine mutase of Clostridium botulinum (strain 657 / Type Ba4).